The primary structure comprises 59 residues: ATP synthase protein 8 (59 aa).

A helical membrane pass occupies residues 7 to 23 (LSPPFLYFELIGHFQVE).

Belongs to the ATPase protein 8 family. As to quaternary structure, F-type ATPases have 2 components, CF(1) - the catalytic core - and CF(0) - the membrane proton channel.

The protein resides in the mitochondrion membrane. Mitochondrial membrane ATP synthase (F(1)F(0) ATP synthase or Complex V) produces ATP from ADP in the presence of a proton gradient across the membrane which is generated by electron transport complexes of the respiratory chain. F-type ATPases consist of two structural domains, F(1) - containing the extramembraneous catalytic core and F(0) - containing the membrane proton channel, linked together by a central stalk and a peripheral stalk. During catalysis, ATP synthesis in the catalytic domain of F(1) is coupled via a rotary mechanism of the central stalk subunits to proton translocation. Part of the complex F(0) domain. Minor subunit located with subunit a in the membrane. This is ATP synthase protein 8 (MT-ATP8) from Oenothera berteroana (Bertero's evening primrose).